Reading from the N-terminus, the 920-residue chain is Anillin-related medial ring protein mid1 (920 aa).

The tract at residues 1–452 is disordered; that stretch reads MKEQEFSYRE…LSSEDLRHPS (452 aa). Residues Ser15 and Ser24 each carry the phosphoserine modification. A Phosphothreonine modification is found at Thr34. 2 positions are modified to phosphoserine: Ser46 and Ser62. The short motif at 69-81 is the Nuclear export sequence (NES) 1 element; that stretch reads LNVATDLLESLDL. At Ser95 the chain carries Phosphoserine. Residues 461–481 show a composition bias toward polar residues; sequence RTYSNYCENEPNKSSQSLVSS. Residue Ser531 is modified to Phosphoserine. The tract at residues 538-561 is disordered; it reads DLPSQDKSTSYEVPNGTENQSPRP. Residues 542–561 show a composition bias toward polar residues; the sequence is QDKSTSYEVPNGTENQSPRP. A cryptic lipid-binding C2 domain region spans residues 551–920; that stretch reads PNGTENQSPR…WLQEYVNFMA (370 aa). The short motif at 681 to 710 is the Nuclear localization sequence (NLS) element; the sequence is RKFFDKLFNRRKKRKLNKAAAVENSKAKKS. A Nuclear export sequence (NES) 2 motif is present at residues 763–773; the sequence is LGNLTLTCLYI. In terms of domain architecture, PH spans 802 to 901; it reads LYNEGYLYRL…WLQVMNSRSF (100 aa).

Homodimer. Interacts with blt1 and cdr2. Interacts with gef2. Interacts with plo1 and rng2. Interacts with fhk2 and sep1. Interacts with clp1. Phosphorylated. At the onset of mitosis, becomes hyperphosphorylated, leaves the nucleus, and forms a medial ring. Phosphorylation by plo1 and other kinases may contribute to solubilizing mid1 for export from the nucleus. Phosphorylation by sid2 drives removal from the cortex at the actomyosin contractile ring constriction onset.

The protein resides in the nucleus. It localises to the cytoplasm. The protein localises to the cell cortex. Its subcellular location is the cytoskeleton. Its function is as follows. Scaffold protein that anchors the contractile ring (CR) at the cell equator during cytokinesis. At the onset of mitosis, membrane-bound oligomers of mid1 assemble recruitment platforms for cytokinetic ring components at the medial cortex and stabilize the ring position during its compaction. Recruits dephosphorylated myo2, but also rng2, clp1 and cdc15 to nodes and to place cytokinetic nodes around the cell equator the medial cortex to promote the ring assembly in cooperation with F-actin. Necessary to stabilize the mitotic spindle perpendicular to the axis of cell division. Also recruits the cdr2 kinase to the CR. In terms of biological role, in the nucleus, binds to the promoter regions of M-G1 transcribed genes to negatively regulate their expression. In Schizosaccharomyces pombe (strain 972 / ATCC 24843) (Fission yeast), this protein is Anillin-related medial ring protein mid1.